We begin with the raw amino-acid sequence, 657 residues long: Conserved oligomeric Golgi complex subunit 6 (657 aa).

The protein belongs to the COG6 family. Component of the conserved oligomeric Golgi complex which is composed of eight different subunits and is required for normal Golgi morphology and localization.

Its subcellular location is the golgi apparatus membrane. Its function is as follows. Required for normal Golgi function. In Homo sapiens (Human), this protein is Conserved oligomeric Golgi complex subunit 6 (COG6).